Reading from the N-terminus, the 537-residue chain is Asparagine-rich protein (537 aa).

Disordered stretches follow at residues Tyr-1–Asn-22, Asn-187–Phe-254, Tyr-336–Asp-372, Leu-399–Gly-479, and Asp-509–Asp-528. 2 stretches are compositionally biased toward low complexity: residues Tyr-336–Asn-347 and Leu-399–Asn-469. Acidic residues predominate over residues Asn-470–Gly-479. The span at Asp-509–Lys-518 shows a compositional bias: basic and acidic residues.

The sequence is that of Asparagine-rich protein from Plasmodium falciparum.